The primary structure comprises 437 residues: tRNA(Ile)-lysidine synthase (437 aa).

Ser-22 to Ser-27 contacts ATP.

This sequence belongs to the tRNA(Ile)-lysidine synthase family.

The protein localises to the cytoplasm. It carries out the reaction cytidine(34) in tRNA(Ile2) + L-lysine + ATP = lysidine(34) in tRNA(Ile2) + AMP + diphosphate + H(+). Ligates lysine onto the cytidine present at position 34 of the AUA codon-specific tRNA(Ile) that contains the anticodon CAU, in an ATP-dependent manner. Cytidine is converted to lysidine, thus changing the amino acid specificity of the tRNA from methionine to isoleucine. In Xylella fastidiosa (strain Temecula1 / ATCC 700964), this protein is tRNA(Ile)-lysidine synthase.